We begin with the raw amino-acid sequence, 127 residues long: NHP2-like protein 1 homolog (127 aa).

It belongs to the eukaryotic ribosomal protein eL8 family.

The protein resides in the nucleus. The protein localises to the nucleolus. Functionally, binds to the 5'-stem-loop of U4 snRNA and may play a role in the late stage of spliceosome assembly. The protein undergoes a conformational change upon RNA-binding. The chain is NHP2-like protein 1 homolog (hoip) from Drosophila melanogaster (Fruit fly).